Here is a 248-residue protein sequence, read N- to C-terminus: 2,3-bisphosphoglycerate-dependent phosphoglycerate mutase (248 aa).

Residues 8 to 15 (RHGESTWN), 21 to 22 (TG), arginine 60, 87 to 90 (ERHY), lysine 98, and 114 to 115 (RR) each bind substrate. The active-site Tele-phosphohistidine intermediate is histidine 9. The active-site Proton donor/acceptor is the glutamate 87. Residues 118–137 (DTPPPALEPTDPRASYDDPR) are disordered. Positions 127–137 (TDPRASYDDPR) are enriched in basic and acidic residues. 183 to 184 (GN) provides a ligand contact to substrate.

Belongs to the phosphoglycerate mutase family. BPG-dependent PGAM subfamily. In terms of assembly, homodimer.

It carries out the reaction (2R)-2-phosphoglycerate = (2R)-3-phosphoglycerate. The protein operates within carbohydrate degradation; glycolysis; pyruvate from D-glyceraldehyde 3-phosphate: step 3/5. In terms of biological role, catalyzes the interconversion of 2-phosphoglycerate and 3-phosphoglycerate. In Cupriavidus necator (strain ATCC 17699 / DSM 428 / KCTC 22496 / NCIMB 10442 / H16 / Stanier 337) (Ralstonia eutropha), this protein is 2,3-bisphosphoglycerate-dependent phosphoglycerate mutase.